The chain runs to 383 residues: MGAGGRTDVPPANRKSEVDPLKRVPFEKPQFSLSQIKKAIPPHCFQRSVLRSFSYVVYDLTIAFCLYYVATHYFHLLPGPLSFRGMAIYWAVQGCILTGVWVIAHECGHHAFSDYQLLDDIVGLILHSALLVPYFSWKYSHRRHHSNTGSLERDEVFVPKQKSCIKWYSKYLNNPPGRVLTLAVTLTLGWPLYLALNVSGRPYDRFACHYDPYGPIYSDRERLQIYISDAGVLAVVYGLFRLAMAKGLAWVVCVYGVPLLVVNGFLVLITFLQHTHPALPHYTSSEWDWLRGALATVDRDYGILNKVFHNITDTHVAHHLFSTMPHYHAMEATKAIKPILGEYYRFDETPFVKAMWREARECIYVEPDQSTESKGVFWYNNKL.

3 helical membrane-spanning segments follow: residues 61–81, 85–105, and 117–137; these read TIAF…PGPL, GMAI…VIAH, and LLDD…YFSW. Positions 105-109 match the Histidine box-1 motif; the sequence is HECGH. A Histidine box-2 motif is present at residues 141–145; it reads HRRHH. 3 helical membrane passes run 179–199, 225–245, and 249–269; these read VLTL…LNVS, IYIS…LAMA, and AWVV…LVLI. Positions 315–319 match the Histidine box-3 motif; sequence HVAHH.

The protein belongs to the fatty acid desaturase type 1 family.

It localises to the endoplasmic reticulum membrane. Its pathway is lipid metabolism; polyunsaturated fatty acid biosynthesis. ER (microsomal) omega-6 fatty acid desaturase introduces the second double bond in the biosynthesis of 18:3 fatty acids, important constituents of plant membranes. It is thought to use cytochrome b5 as an electron donor and to act on fatty acids esterified to phosphatidylcholine and, possibly, other phospholipids. The chain is Omega-6 fatty acid desaturase, endoplasmic reticulum isozyme 2 (FAD2-2) from Glycine max (Soybean).